Consider the following 212-residue polypeptide: Pyridoxine/pyridoxamine 5'-phosphate oxidase (212 aa).

Substrate contacts are provided by residues 8 to 11 (RRSY) and Lys66. FMN contacts are provided by residues 61–66 (RIVLLK), 76–77 (FT), Arg82, Lys83, and Gln105. Substrate contacts are provided by Tyr123, Arg127, and Ser131. Residues 140 to 141 (QS) and Trp184 each bind FMN. Residue 190–192 (RLH) coordinates substrate. Residue Arg194 participates in FMN binding.

Belongs to the pyridoxamine 5'-phosphate oxidase family. As to quaternary structure, homodimer. It depends on FMN as a cofactor.

It carries out the reaction pyridoxamine 5'-phosphate + O2 + H2O = pyridoxal 5'-phosphate + H2O2 + NH4(+). It catalyses the reaction pyridoxine 5'-phosphate + O2 = pyridoxal 5'-phosphate + H2O2. It functions in the pathway cofactor metabolism; pyridoxal 5'-phosphate salvage; pyridoxal 5'-phosphate from pyridoxamine 5'-phosphate: step 1/1. Its pathway is cofactor metabolism; pyridoxal 5'-phosphate salvage; pyridoxal 5'-phosphate from pyridoxine 5'-phosphate: step 1/1. Functionally, catalyzes the oxidation of either pyridoxine 5'-phosphate (PNP) or pyridoxamine 5'-phosphate (PMP) into pyridoxal 5'-phosphate (PLP). The protein is Pyridoxine/pyridoxamine 5'-phosphate oxidase of Cupriavidus necator (strain ATCC 17699 / DSM 428 / KCTC 22496 / NCIMB 10442 / H16 / Stanier 337) (Ralstonia eutropha).